Reading from the N-terminus, the 176-residue chain is Small ribosomal subunit protein bS6 (176 aa).

A disordered region spans residues 97–176; the sequence is DQYTPNDSPP…VEPVDTTSEE (80 aa). The segment covering 140–160 has biased composition (low complexity); the sequence is AVETVEPPAEPAEPVEAVETV. Residues 161-176 are compositionally biased toward acidic residues; sequence DTTEETVEPVDTTSEE.

It belongs to the bacterial ribosomal protein bS6 family.

In terms of biological role, binds together with bS18 to 16S ribosomal RNA. In Gloeothece citriformis (strain PCC 7424) (Cyanothece sp. (strain PCC 7424)), this protein is Small ribosomal subunit protein bS6.